A 259-amino-acid polypeptide reads, in one-letter code: 14-3-3-like protein (259 aa).

This sequence belongs to the 14-3-3 family.

This Helianthus annuus (Common sunflower) protein is 14-3-3-like protein.